The primary structure comprises 296 residues: Nucleotide-binding protein Pnuc_1915 (296 aa).

G8 to S15 contributes to the ATP binding site. D57 to R60 contributes to the GTP binding site.

Belongs to the RapZ-like family.

Its function is as follows. Displays ATPase and GTPase activities. The chain is Nucleotide-binding protein Pnuc_1915 from Polynucleobacter asymbioticus (strain DSM 18221 / CIP 109841 / QLW-P1DMWA-1) (Polynucleobacter necessarius subsp. asymbioticus).